We begin with the raw amino-acid sequence, 165 residues long: Heme oxygenase (165 aa).

This sequence belongs to the heme oxygenase family.

It carries out the reaction heme b + 3 reduced [NADPH--hemoprotein reductase] + 3 O2 = biliverdin IXalpha + CO + Fe(2+) + 3 oxidized [NADPH--hemoprotein reductase] + 3 H2O + H(+). Its function is as follows. Catalyzes the opening of the heme ring to form the open-chain tetrapyrrole biliverdin IX with the release of iron and carbon monoxide (CO). The sequence is that of Heme oxygenase (bphO) from Xanthomonas campestris pv. campestris (strain 8004).